The primary structure comprises 934 residues: MSSSHHRRSRETSHAEMPIGRYTRLDEIGRGSFATVYQGVHTKSRTYVAIKSVNLSKLNKKLKENLSSEIHILKGLYHPHIVALIDCHETTSHIHLVMEYCALGDLSLFIKRRDTLGDHRYTQDMIAKYPNPRGGALNEVVVRHFLKQLASALKFLRDRNLIHRDIKPQNLLLCPSPSSYRSGVAQVVPFKGCDESFSPATGLESLPMLKIADFGFARSLPSTSLAETLCGSPLYMAPEILRYEKYDAKADLWSVGTVLYEMVVGKPPFRATNHVELLRKIEKGEDRIKFPEENPASEQIKSLIRMLLKRNPVERMNFSDFFDCDTITGPIPGLIADDAPSTSRRSSVAVNTSGSTSRPQSRTGSRTPTGMKREKDASYPGKKDDQVSYPAAHRPPTQRSDTPPASSPMRRMGSGDRATTSKETVTTTPRRPSVVSLATAPGRQELVDRNATAAVMERQRSRNTYAGVPQTEKQAEKTKEESERAAQEIAFERDYVLVEKRAVEVNAFADELAHSPRIQGGFPRNAYALSRRPGTQGSSTATATSPLATTGKAMQVASGRARADSTHTRQGSYERRYGQSPTSAISKALHMASGRLFGMGFSPPMTITKGGRSPPLGYNPFPAYPAAQGSLMVVGDGARTNVTLDEDAKTVQVIEECATRSDVVYGFAEVKYKQLIPLAPSVQTDPSGRANVPGGERDSTDLTDGGLTVDAVVTLSEEALVLYVKALSLLAKSMDIAGAWWSRKNRGEAFGESAMGRTDATSTLVSNRINNVVQWVRNRFNEVLEKAEFVRLKLIEGQKRLPPDHPSHPSNHSVGPSVGSGASTDVVVSSGVTAEKLMYDRALEMSRAAAINELTGEELSGCEIAYVTAIRMLEAVLEEEEVSRSEPGSGTDRGDARRDGDKAMLDGVRMEDRQVVIKSSIFIVTRKQSSFVLP.

One can recognise a Protein kinase domain in the interval 22 to 328 (YTRLDEIGRG…SDFFDCDTIT (307 aa)). Residues 28–36 (IGRGSFATV) and K51 contribute to the ATP site. D165 functions as the Proton acceptor in the catalytic mechanism. Disordered regions lie at residues 335–432 (IADD…PRRP), 462–481 (RNTYAGVPQTEKQAEKTKEE), 531–580 (RRPG…YGQS), 684–703 (TDPSGRANVPGGERDSTDLT), 800–822 (RLPPDHPSHPSNHSVGPSVGSGA), and 878–900 (EEEEVSRSEPGSGTDRGDARRDG). Over residues 340 to 368 (PSTSRRSSVAVNTSGSTSRPQSRTGSRTP) the composition is skewed to polar residues. Positions 371-386 (MKREKDASYPGKKDDQ) are enriched in basic and acidic residues. Low complexity predominate over residues 538–550 (SSTATATSPLATT). Positions 561-577 (ARADSTHTRQGSYERRY) are enriched in basic and acidic residues.

Belongs to the protein kinase superfamily. Ser/Thr protein kinase family. APG1/unc-51/ULK1 subfamily. Homodimer. Forms a ternary complex with ATG13 and ATG17.

Its subcellular location is the cytoplasm. The protein resides in the preautophagosomal structure membrane. The catalysed reaction is L-seryl-[protein] + ATP = O-phospho-L-seryl-[protein] + ADP + H(+). It catalyses the reaction L-threonyl-[protein] + ATP = O-phospho-L-threonyl-[protein] + ADP + H(+). In terms of biological role, serine/threonine protein kinase involved in the cytoplasm to vacuole transport (Cvt) and found to be essential in autophagy, where it is required for the formation of autophagosomes. Involved in the clearance of protein aggregates which cannot be efficiently cleared by the proteasome. Required for selective autophagic degradation of the nucleus (nucleophagy) as well as for mitophagy which contributes to regulate mitochondrial quantity and quality by eliminating the mitochondria to a basal level to fulfill cellular energy requirements and preventing excess ROS production. Also involved in endoplasmic reticulum-specific autophagic process, in selective removal of ER-associated degradation (ERAD) substrates. Plays a key role in ATG9 and ATG23 cycling through the pre-autophagosomal structure and is necessary to promote ATG18 binding to ATG9 through phosphorylation of ATG9. Catalyzes phosphorylation of ATG4, decreasing the interaction between ATG4 and ATG8 and impairing deconjugation of PE-conjugated forms of ATG8. Required for conidiation and development of aerial hyphae. The sequence is that of Serine/threonine-protein kinase atg1 from Aspergillus oryzae (strain ATCC 42149 / RIB 40) (Yellow koji mold).